A 158-amino-acid chain; its full sequence is NAD(P)H-quinone oxidoreductase subunit J, chloroplastic (158 aa).

It belongs to the complex I 30 kDa subunit family. As to quaternary structure, NDH is composed of at least 16 different subunits, 5 of which are encoded in the nucleus.

The protein resides in the plastid. Its subcellular location is the chloroplast thylakoid membrane. The enzyme catalyses a plastoquinone + NADH + (n+1) H(+)(in) = a plastoquinol + NAD(+) + n H(+)(out). The catalysed reaction is a plastoquinone + NADPH + (n+1) H(+)(in) = a plastoquinol + NADP(+) + n H(+)(out). NDH shuttles electrons from NAD(P)H:plastoquinone, via FMN and iron-sulfur (Fe-S) centers, to quinones in the photosynthetic chain and possibly in a chloroplast respiratory chain. The immediate electron acceptor for the enzyme in this species is believed to be plastoquinone. Couples the redox reaction to proton translocation, and thus conserves the redox energy in a proton gradient. The protein is NAD(P)H-quinone oxidoreductase subunit J, chloroplastic of Arabis hirsuta (Hairy rock-cress).